Consider the following 218-residue polypeptide: MHHSFFYDSNTEKISLIAQAAYYDRTLTTPIEIYCNVNLFTFFDSIKHIGLGYNTPTGRDILFDVRFLGNNYYQDPETAPSYPPEFIQMQQEYPTLSNWNAVKTIQLVSNLLPINKESIPSFRNSNVGIINAQGILADFVPLVTNGPEARISIDFVATGPWRLIDMFGSVPIYMVDLYVYWTDQTGGQYLINIPPGRILTCKLVFIKKSLSKYLVSEK.

It is found in the virion. In Sputnik virophage, this protein is Structural protein V19.